Consider the following 120-residue polypeptide: Small ribosomal subunit protein uS17 (120 aa).

Low complexity predominate over residues 1–22; it reads MMAEAKTGAKATKSAAAGAADG. The interval 1–46 is disordered; sequence MMAEAKTGAKATKSAAAGAADGASKEKGPKHTPSPPKPSGRRKTRI.

It belongs to the universal ribosomal protein uS17 family. As to quaternary structure, part of the 30S ribosomal subunit.

One of the primary rRNA binding proteins, it binds specifically to the 5'-end of 16S ribosomal RNA. This is Small ribosomal subunit protein uS17 from Mycobacterium ulcerans (strain Agy99).